We begin with the raw amino-acid sequence, 447 residues long: tRNA-2-methylthio-N(6)-dimethylallyladenosine synthase (447 aa).

Residues 8-126 (KKVVTLAYGC…FQRLLEEAEE (119 aa)) form the MTTase N-terminal domain. Residues Cys17, Cys53, Cys87, Cys162, Cys166, and Cys169 each contribute to the [4Fe-4S] cluster site. Residues 148–378 (AKGKLKAYVN…ITVQNAQSLA (231 aa)) enclose the Radical SAM core domain. The TRAM domain maps to 381–444 (QEMIGKTCEV…SWTLFGECRA (64 aa)).

It belongs to the methylthiotransferase family. MiaB subfamily. Monomer. [4Fe-4S] cluster is required as a cofactor.

The protein localises to the cytoplasm. It carries out the reaction N(6)-dimethylallyladenosine(37) in tRNA + (sulfur carrier)-SH + AH2 + 2 S-adenosyl-L-methionine = 2-methylsulfanyl-N(6)-dimethylallyladenosine(37) in tRNA + (sulfur carrier)-H + 5'-deoxyadenosine + L-methionine + A + S-adenosyl-L-homocysteine + 2 H(+). Catalyzes the methylthiolation of N6-(dimethylallyl)adenosine (i(6)A), leading to the formation of 2-methylthio-N6-(dimethylallyl)adenosine (ms(2)i(6)A) at position 37 in tRNAs that read codons beginning with uridine. The chain is tRNA-2-methylthio-N(6)-dimethylallyladenosine synthase from Desulfitobacterium hafniense (strain Y51).